Here is a 476-residue protein sequence, read N- to C-terminus: ATP synthase subunit beta (476 aa).

Residue G154–T161 coordinates ATP.

Belongs to the ATPase alpha/beta chains family. F-type ATPases have 2 components, CF(1) - the catalytic core - and CF(0) - the membrane proton channel. CF(1) has five subunits: alpha(3), beta(3), gamma(1), delta(1), epsilon(1). CF(0) has three main subunits: a(1), b(2) and c(9-12). The alpha and beta chains form an alternating ring which encloses part of the gamma chain. CF(1) is attached to CF(0) by a central stalk formed by the gamma and epsilon chains, while a peripheral stalk is formed by the delta and b chains.

It localises to the cell inner membrane. The enzyme catalyses ATP + H2O + 4 H(+)(in) = ADP + phosphate + 5 H(+)(out). In terms of biological role, produces ATP from ADP in the presence of a proton gradient across the membrane. The catalytic sites are hosted primarily by the beta subunits. The protein is ATP synthase subunit beta of Afipia carboxidovorans (strain ATCC 49405 / DSM 1227 / KCTC 32145 / OM5) (Oligotropha carboxidovorans).